A 284-amino-acid polypeptide reads, in one-letter code: Nucleotide-binding protein SPO0713 (284 aa).

3–10 serves as a coordination point for ATP; it reads GPSGAGRS. Position 50–53 (50–53) interacts with GTP; that stretch reads DARN.

This sequence belongs to the RapZ-like family.

In terms of biological role, displays ATPase and GTPase activities. The sequence is that of Nucleotide-binding protein SPO0713 from Ruegeria pomeroyi (strain ATCC 700808 / DSM 15171 / DSS-3) (Silicibacter pomeroyi).